The following is a 379-amino-acid chain: tRNA (guanine(26)-N(2))-dimethyltransferase (379 aa).

Residues valine 4–leucine 375 enclose the Trm1 methyltransferase domain. Residues arginine 36, arginine 61, aspartate 78, aspartate 120, and alanine 121 each coordinate S-adenosyl-L-methionine.

This sequence belongs to the class I-like SAM-binding methyltransferase superfamily. Trm1 family.

It catalyses the reaction guanosine(26) in tRNA + 2 S-adenosyl-L-methionine = N(2)-dimethylguanosine(26) in tRNA + 2 S-adenosyl-L-homocysteine + 2 H(+). Its function is as follows. Dimethylates a single guanine residue at position 26 of a number of tRNAs using S-adenosyl-L-methionine as donor of the methyl groups. The polypeptide is tRNA (guanine(26)-N(2))-dimethyltransferase (Pyrococcus abyssi (strain GE5 / Orsay)).